Reading from the N-terminus, the 301-residue chain is 33 kDa chaperonin (301 aa).

2 cysteine pairs are disulfide-bonded: C244-C246 and C277-C280.

The protein belongs to the HSP33 family. Post-translationally, under oxidizing conditions two disulfide bonds are formed involving the reactive cysteines. Under reducing conditions zinc is bound to the reactive cysteines and the protein is inactive.

It is found in the cytoplasm. Functionally, redox regulated molecular chaperone. Protects both thermally unfolding and oxidatively damaged proteins from irreversible aggregation. Plays an important role in the bacterial defense system toward oxidative stress. This chain is 33 kDa chaperonin, found in Geobacter sulfurreducens (strain ATCC 51573 / DSM 12127 / PCA).